The following is a 159-amino-acid chain: Phosphopantetheine adenylyltransferase (159 aa).

Position 10 (Thr10) interacts with substrate. Residues 10-11 (TF) and His18 each bind ATP. The substrate site is built by Lys42, Met74, and Arg88. Residues 89–91 (GLR), Glu99, and 124–130 (WSFISSS) contribute to the ATP site.

This sequence belongs to the bacterial CoaD family. As to quaternary structure, homohexamer. Mg(2+) serves as cofactor.

The protein resides in the cytoplasm. It carries out the reaction (R)-4'-phosphopantetheine + ATP + H(+) = 3'-dephospho-CoA + diphosphate. It participates in cofactor biosynthesis; coenzyme A biosynthesis; CoA from (R)-pantothenate: step 4/5. In terms of biological role, reversibly transfers an adenylyl group from ATP to 4'-phosphopantetheine, yielding dephospho-CoA (dPCoA) and pyrophosphate. The sequence is that of Phosphopantetheine adenylyltransferase from Escherichia coli (strain UTI89 / UPEC).